We begin with the raw amino-acid sequence, 147 residues long: Myoglobin (147 aa).

The 140-residue stretch at 2-141 (ADFDMVLKCW…IIADMEADYK (140 aa)) folds into the Globin domain. His-60 contacts nitrite. Position 60 (His-60) interacts with O2. Residue His-89 coordinates heme b.

The protein belongs to the globin family. Monomeric.

The protein resides in the cytoplasm. It localises to the sarcoplasm. It catalyses the reaction Fe(III)-heme b-[protein] + nitric oxide + H2O = Fe(II)-heme b-[protein] + nitrite + 2 H(+). It carries out the reaction H2O2 + AH2 = A + 2 H2O. Functionally, monomeric heme protein which primary function is to store oxygen and facilitate its diffusion within muscle tissues. Reversibly binds oxygen through a pentacoordinated heme iron and enables its timely and efficient release as needed during periods of heightened demand. Depending on the oxidative conditions of tissues and cells, and in addition to its ability to bind oxygen, it also has a nitrite reductase activity whereby it regulates the production of bioactive nitric oxide. Under stress conditions, like hypoxia and anoxia, it also protects cells against reactive oxygen species thanks to its pseudoperoxidase activity. The chain is Myoglobin (mb) from Gobionotothen gibberifrons (Humped rockcod).